The primary structure comprises 61 residues: MARKALMVKAQRPQKYTVRAYNRCKICGRSRAYMRKFGMCRICFREHALRGLIPGVTKSSW.

Zn(2+) contacts are provided by Cys24, Cys27, Cys40, and Cys43.

It belongs to the universal ribosomal protein uS14 family. Zinc-binding uS14 subfamily. In terms of assembly, part of the 30S ribosomal subunit. Contacts proteins S3 and S10. It depends on Zn(2+) as a cofactor.

Binds 16S rRNA, required for the assembly of 30S particles and may also be responsible for determining the conformation of the 16S rRNA at the A site. The polypeptide is Small ribosomal subunit protein uS14 (Roseiflexus castenholzii (strain DSM 13941 / HLO8)).